The primary structure comprises 176 residues: Nucleoside triphosphate/diphosphate phosphatase (176 aa).

The active-site Proton donor is the arginine 23. Asparagine 87, aspartate 103, aspartate 105, aspartate 107, aspartate 120, and glutamate 123 together coordinate Mg(2+).

Belongs to the Ntdp family. Mg(2+) is required as a cofactor.

The catalysed reaction is a ribonucleoside 5'-triphosphate + H2O = a ribonucleoside 5'-diphosphate + phosphate + H(+). It carries out the reaction a ribonucleoside 5'-diphosphate + H2O = a ribonucleoside 5'-phosphate + phosphate + H(+). Its function is as follows. Has nucleoside phosphatase activity towards nucleoside triphosphates and nucleoside diphosphates. The chain is Nucleoside triphosphate/diphosphate phosphatase from Bacillus cereus (strain AH820).